The chain runs to 333 residues: Phosphate acyltransferase (333 aa).

This sequence belongs to the PlsX family. As to quaternary structure, homodimer. Probably interacts with PlsY.

Its subcellular location is the cytoplasm. It carries out the reaction a fatty acyl-[ACP] + phosphate = an acyl phosphate + holo-[ACP]. The protein operates within lipid metabolism; phospholipid metabolism. In terms of biological role, catalyzes the reversible formation of acyl-phosphate (acyl-PO(4)) from acyl-[acyl-carrier-protein] (acyl-ACP). This enzyme utilizes acyl-ACP as fatty acyl donor, but not acyl-CoA. In Clostridium beijerinckii (strain ATCC 51743 / NCIMB 8052) (Clostridium acetobutylicum), this protein is Phosphate acyltransferase.